The sequence spans 132 residues: Small ribosomal subunit protein uS8 (132 aa).

The protein belongs to the universal ribosomal protein uS8 family. Part of the 30S ribosomal subunit. Contacts proteins S5 and S12.

One of the primary rRNA binding proteins, it binds directly to 16S rRNA central domain where it helps coordinate assembly of the platform of the 30S subunit. The polypeptide is Small ribosomal subunit protein uS8 (Enterococcus faecalis (strain ATCC 700802 / V583)).